Consider the following 950-residue polypeptide: Double-stranded RNA-binding protein Staufen homolog (950 aa).

Disordered stretches follow at residues 25–168, 202–274, and 288–342; these read VSGA…QQQQ, QQQL…QPST, and VTPV…NTKE. The span at 31 to 43 shows a compositional bias: low complexity; the sequence is QQRSMMSQQRGGS. Residues 45–66 are compositionally biased toward polar residues; that stretch reads AINSSKSPYQLQTSSISQFSHL. Residues 67-77 are compositionally biased toward low complexity; the sequence is QQQQQQQQQQQ. Polar residues predominate over residues 78–122; it reads LVNNYHKQKQMSPDITSHQFSSSTGGGMPTQNGNYQSMSGSSIHT. Low complexity-rich tracts occupy residues 130–143, 153–168, and 202–253; these read QLSL…YSSQ, QQHH…QQQQ, and QQQL…ILQH. The segment covering 254-274 has biased composition (polar residues); the sequence is SPTSGKSLSSAPHGTSVQPST. Basic and acidic residues predominate over residues 313 to 322; that stretch reads SGRDSVHVSD. DRBM domains lie at 344–411, 435–546, 578–645, and 690–758; these read TPMC…ETKC, TPTV…ILKN, SEIS…ELRK, and NPIS…LLGY. Disordered regions lie at residues 758 to 833 and 922 to 950; these read YTKP…HTAS and DIHP…DFSK. The span at 765-782 shows a compositional bias: polar residues; that stretch reads PTKSSFKNPSTGEAGQTN. Positions 922 to 937 are enriched in basic and acidic residues; sequence DIHPGGDGPQVKKDVL.

In terms of tissue distribution, strongly expressed in nervous tissue (at protein level).

The protein resides in the perikaryon. Its subcellular location is the cell projection. RNA-binding protein which is required for syntaxin location in sensory neurons during long-term synaptic facilitation. Binds to syntaxin mRNA and is required to maintain its accumulation at the axon hillock following neuronal stimulation and at the opposite pole in stable unstimulated sensory neurons. This chain is Double-stranded RNA-binding protein Staufen homolog, found in Aplysia californica (California sea hare).